Consider the following 90-residue polypeptide: C-C motif chemokine 4 homolog (90 aa).

The N-terminal stretch at 1-21 (MKVSVAALAVLLIAICYQTSA) is a signal peptide. Disulfide bonds link Cys-32-Cys-56 and Cys-33-Cys-72.

It belongs to the intercrine beta (chemokine CC) family. In terms of assembly, homodimer.

It localises to the secreted. Its function is as follows. Monokine with inflammatory and chemokinetic properties. This chain is C-C motif chemokine 4 homolog (CCL4), found in Gallus gallus (Chicken).